The sequence spans 249 residues: General transcription factor IIF subunit 2 (249 aa).

The residue at position 2 (Ala-2) is an N-acetylalanine. Residues Lys-22, Lys-33, and Lys-137 each carry the N6-acetyllysine modification. Ser-142 carries the post-translational modification Phosphoserine. Residues Gly-227 and His-229 each contribute to the DNA site. Residue Ser-248 is modified to Phosphoserine.

It belongs to the TFIIF beta subunit family. Heterodimer of an alpha and a beta subunit. Interacts with HTATSF1 and GPBP1. Interacts with URI1. Interacts with GTF2B (via N-terminus); this interaction is inhibited in presence of GTF2F1. Part of TBP-based Pol II pre-initiation complex (PIC), in which Pol II core assembles with general transcription factors and other specific initiation factors including GTF2E1, GTF2E2, GTF2F1, GTF2F2, TCEA1, ERCC2, ERCC3, GTF2H2, GTF2H3, GTF2H4, GTF2H5, GTF2A1, GTF2A2, GTF2B and TBP; this large multi-subunit PIC complex mediates DNA unwinding and targets Pol II core to the transcription start site where the first phosphodiester bond forms.

It localises to the nucleus. In terms of biological role, TFIIF is a general transcription initiation factor that binds to RNA polymerase II and helps to recruit it to the initiation complex in collaboration with TFIIB. It promotes transcription elongation. This Rattus norvegicus (Rat) protein is General transcription factor IIF subunit 2 (Gtf2f2).